Here is a 264-residue protein sequence, read N- to C-terminus: Undecaprenyl-diphosphatase (264 aa).

8 helical membrane passes run 7–27 (IVLA…SAHL), 41–61 (LIFD…YYQA), 89–109 (VLLG…FVAV), 114–134 (IEII…ASWF), 144–164 (TISW…LIPG), 186–206 (IQFS…LMLI), 219–239 (LLVL…IFVI), and 244–264 (MVGM…LFFL).

It belongs to the UppP family.

It localises to the cell inner membrane. It catalyses the reaction di-trans,octa-cis-undecaprenyl diphosphate + H2O = di-trans,octa-cis-undecaprenyl phosphate + phosphate + H(+). Catalyzes the dephosphorylation of undecaprenyl diphosphate (UPP). Confers resistance to bacitracin. The sequence is that of Undecaprenyl-diphosphatase from Vesicomyosocius okutanii subsp. Calyptogena okutanii (strain HA).